Consider the following 266-residue polypeptide: Tryptophan synthase alpha chain (266 aa).

Catalysis depends on proton acceptor residues Glu49 and Asp60.

It belongs to the TrpA family. Tetramer of two alpha and two beta chains.

The enzyme catalyses (1S,2R)-1-C-(indol-3-yl)glycerol 3-phosphate + L-serine = D-glyceraldehyde 3-phosphate + L-tryptophan + H2O. It functions in the pathway amino-acid biosynthesis; L-tryptophan biosynthesis; L-tryptophan from chorismate: step 5/5. The alpha subunit is responsible for the aldol cleavage of indoleglycerol phosphate to indole and glyceraldehyde 3-phosphate. The chain is Tryptophan synthase alpha chain from Thioalkalivibrio sulfidiphilus (strain HL-EbGR7).